Reading from the N-terminus, the 300-residue chain is Cutinase est2 (300 aa).

A signal peptide spans 1-39; it reads MSVTTPRRETSLLSRALRATAAAATAVVATVALAAPAQA. Tyr-99 contacts poly(ethylene terephthalate). Ser-169 serves as the catalytic Nucleophile. Poly(ethylene terephthalate)-binding residues include Met-170 and Trp-194. Glu-213 lines the Ca(2+) pocket. The active-site Charge relay system is the Asp-215. Asp-243 is a binding site for Ca(2+). His-247 (charge relay system) is an active-site residue. Cys-280 and Cys-298 are disulfide-bonded. Ca(2+) is bound at residue Glu-292.

It belongs to the AB hydrolase superfamily. As to quaternary structure, monomer. The cofactor is Ca(2+).

It is found in the secreted. The protein localises to the periplasm. It catalyses the reaction an acetyl ester + H2O = an aliphatic alcohol + acetate + H(+). The enzyme catalyses (ethylene terephthalate)(n) + H2O = (ethylene terephthalate)(n-1) + 4-[(2-hydroxyethoxy)carbonyl]benzoate + H(+). The catalysed reaction is a butanoate ester + H2O = an aliphatic alcohol + butanoate + H(+). It carries out the reaction cutin + H2O = cutin monomers.. It catalyses the reaction a hexanoate ester + H2O = an aliphatic alcohol + hexanoate + H(+). The enzyme catalyses an octanoate ester + H2O = an aliphatic alcohol + octanoate + H(+). Activated by calcium ions. Activated by magnesium ions. Activated by manganese ions. Inhibited by the serine hydrolase inhibitor phenylmethanesulfonyl fluoride (PMSF). Inhibited by the chelator ethylenediaminetetraacetic acid (EDTA). Inhibited by iron ions. Inhibited by aluminum ions. Inhibited by rubidium ions. Inhibited by lithium ions. Its function is as follows. Catalyzes the hydrolysis of cutin, a polyester that forms the structure of plant cuticle. Shows esterase activity towards p-nitrophenol-linked aliphatic esters (pNP-aliphatic esters). Capable of degrading the plastic poly(ethylene terephthalate) (PET), the most abundant polyester plastic in the world. Can also depolymerize the synthetic polyesters poly(epsilon-caprolactone) (PCL), poly(butylene succinate-co-adipate) (PBSA), poly(butylene succinate) (PBS), and poly(lactic acid) (PLA). This is Cutinase est2 from Thermobifida alba (Thermomonospora alba).